A 129-amino-acid chain; its full sequence is ATP synthase epsilon chain (129 aa).

It belongs to the ATPase epsilon chain family. In terms of assembly, F-type ATPases have 2 components, CF(1) - the catalytic core - and CF(0) - the membrane proton channel. CF(1) has five subunits: alpha(3), beta(3), gamma(1), delta(1), epsilon(1). CF(0) has three main subunits: a, b and c.

It is found in the cell inner membrane. Its function is as follows. Produces ATP from ADP in the presence of a proton gradient across the membrane. In Campylobacter fetus subsp. fetus (strain 82-40), this protein is ATP synthase epsilon chain.